Consider the following 968-residue polypeptide: RNA polymerase-associated protein RapA (968 aa).

The Helicase ATP-binding domain maps to 164–334 (DVGRRHAPRV…FARLRLLDPN (171 aa)). 177 to 184 (DEVGLGKT) is an ATP binding site. Positions 280–283 (DEAH) match the DEAH box motif. The 196-residue stretch at 490 to 685 (RVEWLMGYLT…ALKAQLEQGR (196 aa)) folds into the Helicase C-terminal domain.

This sequence belongs to the SNF2/RAD54 helicase family. RapA subfamily. Interacts with the RNAP. Has a higher affinity for the core RNAP than for the holoenzyme. Its ATPase activity is stimulated by binding to RNAP.

In terms of biological role, transcription regulator that activates transcription by stimulating RNA polymerase (RNAP) recycling in case of stress conditions such as supercoiled DNA or high salt concentrations. Probably acts by releasing the RNAP, when it is trapped or immobilized on tightly supercoiled DNA. Does not activate transcription on linear DNA. Probably not involved in DNA repair. This is RNA polymerase-associated protein RapA from Salmonella paratyphi C (strain RKS4594).